Consider the following 108-residue polypeptide: UPF0060 membrane protein KPK_2870 (108 aa).

The next 4 helical transmembrane spans lie at 6–26 (LLFF…WLWL), 29–49 (GATP…VWLL), 61–81 (AAYG…VDGV), and 86–106 (YDWA…AGWG).

This sequence belongs to the UPF0060 family.

It localises to the cell inner membrane. The chain is UPF0060 membrane protein KPK_2870 from Klebsiella pneumoniae (strain 342).